A 189-amino-acid chain; its full sequence is uncharacterized protein (189 aa).

This is an uncharacterized protein from Danio rerio (Zebrafish).